Consider the following 506-residue polypeptide: MKGIPKRPISNYIEKTNETNLYKIRKGLVNEMNVEGHIYVNEKLKTLLDEEIATYELNKNSTFLPAVMQIANVSTLPGIVKASIALPDVHAGYGFSIGNVAAFDMDNEKAIVSPGGVGFDINCGVRLIRTNLFYEDIKPKQEELTQLLFNHIPVGVGSQGFILCNQENLDDALCLGMDWCVKEGYSWIEDKLNCEDNGRSLYADSNFVSIRAKKRGITQMGTLGAGNHYAEIQIVDQIYDKKSAKLMGIEKKNQVCIMIHSGSRGLGHQIATDALIDMEKSMNKYKINVIDKQLACTPIHSKEGQNYLKAMGSACNFAWINRSSMTFLARQAFSKIFNQSPDDLDMHVIYDVSHNIAKIEEHYIDGKIKKLLVHRKGSTRAFPPFHPLVPLDYQYCGQPILIGGTMGTYSYVLTGNEKAMQATFGSTCHGAGRALSRNKSRNTLSYLDVLNKLKEQNISIRVASPKLIMEEAPESYKNVCDVVQTCHDAGISNKCFRLKPVAVIKG.

Residues Asp120, Cys123, His228, His260, and His354 each coordinate Mn(2+). 227-231 (NHYAE) lines the GMP pocket. GMP is bound by residues 354–355 (HN), 403–406 (GGTM), Ser410, 429–432 (HGAG), and Lys505. Residue His429 is the GMP-histidine intermediate of the active site.

Belongs to the RtcB family. As to quaternary structure, catalytic component of the tRNA-splicing ligase complex. Mn(2+) is required as a cofactor.

The enzyme catalyses a 3'-end 3'-phospho-ribonucleotide-RNA + a 5'-end dephospho-ribonucleoside-RNA + GTP = a ribonucleotidyl-ribonucleotide-RNA + GMP + diphosphate. It carries out the reaction a 3'-end 2',3'-cyclophospho-ribonucleotide-RNA + a 5'-end dephospho-ribonucleoside-RNA + GTP + H2O = a ribonucleotidyl-ribonucleotide-RNA + GMP + diphosphate + H(+). Catalytic subunit of the tRNA-splicing ligase complex that acts by directly joining spliced tRNA halves to mature-sized tRNAs by incorporating the precursor-derived splice junction phosphate into the mature tRNA as a canonical 3',5'-phosphodiester. May act as an RNA ligase with broad substrate specificity, and may function toward other RNAs. The polypeptide is RNA-splicing ligase RtcB homolog (Plasmodium falciparum (isolate 3D7)).